The chain runs to 478 residues: Glycogen synthase (478 aa).

Residue K15 participates in ADP-alpha-D-glucose binding.

This sequence belongs to the glycosyltransferase 1 family. Bacterial/plant glycogen synthase subfamily.

The catalysed reaction is [(1-&gt;4)-alpha-D-glucosyl](n) + ADP-alpha-D-glucose = [(1-&gt;4)-alpha-D-glucosyl](n+1) + ADP + H(+). It functions in the pathway glycan biosynthesis; glycogen biosynthesis. Functionally, synthesizes alpha-1,4-glucan chains using ADP-glucose. This is Glycogen synthase from Streptococcus uberis (strain ATCC BAA-854 / 0140J).